A 366-amino-acid chain; its full sequence is UDP-N-acetylglucosamine--N-acetylmuramyl-(pentapeptide) pyrophosphoryl-undecaprenol N-acetylglucosamine transferase (366 aa).

Residues 14–16 (TGG), N125, R168, S196, and Q297 contribute to the UDP-N-acetyl-alpha-D-glucosamine site.

This sequence belongs to the glycosyltransferase 28 family. MurG subfamily.

It localises to the cell inner membrane. The enzyme catalyses di-trans,octa-cis-undecaprenyl diphospho-N-acetyl-alpha-D-muramoyl-L-alanyl-D-glutamyl-meso-2,6-diaminopimeloyl-D-alanyl-D-alanine + UDP-N-acetyl-alpha-D-glucosamine = di-trans,octa-cis-undecaprenyl diphospho-[N-acetyl-alpha-D-glucosaminyl-(1-&gt;4)]-N-acetyl-alpha-D-muramoyl-L-alanyl-D-glutamyl-meso-2,6-diaminopimeloyl-D-alanyl-D-alanine + UDP + H(+). Its pathway is cell wall biogenesis; peptidoglycan biosynthesis. In terms of biological role, cell wall formation. Catalyzes the transfer of a GlcNAc subunit on undecaprenyl-pyrophosphoryl-MurNAc-pentapeptide (lipid intermediate I) to form undecaprenyl-pyrophosphoryl-MurNAc-(pentapeptide)GlcNAc (lipid intermediate II). The polypeptide is UDP-N-acetylglucosamine--N-acetylmuramyl-(pentapeptide) pyrophosphoryl-undecaprenol N-acetylglucosamine transferase (Rhodopseudomonas palustris (strain BisB5)).